A 64-amino-acid polypeptide reads, in one-letter code: Large ribosomal subunit protein bL35 (64 aa).

The protein belongs to the bacterial ribosomal protein bL35 family.

The protein is Large ribosomal subunit protein bL35 of Mycoplasmopsis pulmonis (strain UAB CTIP) (Mycoplasma pulmonis).